An 85-amino-acid polypeptide reads, in one-letter code: Large ribosomal subunit protein bL27 (85 aa).

Residues 1 to 21 (MAHKKAGGSTRNGRDSESKRL) form a disordered region.

It belongs to the bacterial ribosomal protein bL27 family.

This is Large ribosomal subunit protein bL27 from Ectopseudomonas mendocina (strain ymp) (Pseudomonas mendocina).